Here is a 261-residue protein sequence, read N- to C-terminus: MTCWLRGVTATFGRPAEWPGYLSHLCGRSAAMDLGPMRKSYRGDREAFEETHLTSLDPVKQFAAWFEEAVQCPDIGEANAMCLATCTRDGKPSARMLLLKGFGKDGFRFFTNFESRKGKELDSNPFASLVFYWEPLNRQVRVEGPVKKLPEEEAECYFHSRPKSSQIGAVVSHQSSVIPDREYLRKKNEELEQLYQDQEVPKPKSWGGYVLYPQVMEFWQGQTNRLHDRIVFRRGLPTGDSPLGPMTHRGEEDWLYERLAP.

42–45 (RGDR) contacts pyridoxal 5'-phosphate. 95-98 (RMLL) lines the FMN pocket. A pyridoxal 5'-phosphate-binding site is contributed by lysine 100. FMN contacts are provided by residues 110 to 111 (FT), 116 to 117 (RK), and glutamine 139. Tyrosine 157, arginine 161, and serine 165 together coordinate pyridoxal 5'-phosphate. FMN-binding positions include 174 to 175 (QS) and tryptophan 219. Position 225 to 227 (225 to 227 (RLH)) interacts with pyridoxal 5'-phosphate. Position 229 (arginine 229) interacts with FMN. Position 238 is a phosphothreonine (threonine 238). Serine 241 is modified (phosphoserine).

Belongs to the pyridoxamine 5'-phosphate oxidase family. Homodimer. The cofactor is FMN. In terms of tissue distribution, ubiquitous. Expressed in liver, brain, lung, prostate and stomach (at protein level).

It catalyses the reaction pyridoxine 5'-phosphate + O2 = pyridoxal 5'-phosphate + H2O2. The catalysed reaction is pyridoxamine 5'-phosphate + O2 + H2O = pyridoxal 5'-phosphate + H2O2 + NH4(+). Its pathway is cofactor metabolism; pyridoxal 5'-phosphate salvage; pyridoxal 5'-phosphate from pyridoxamine 5'-phosphate: step 1/1. It participates in cofactor metabolism; pyridoxal 5'-phosphate salvage; pyridoxal 5'-phosphate from pyridoxine 5'-phosphate: step 1/1. Catalyzes the oxidation of either pyridoxine 5'-phosphate (PNP) or pyridoxamine 5'-phosphate (PMP) into pyridoxal 5'-phosphate (PLP). This Homo sapiens (Human) protein is Pyridoxine-5'-phosphate oxidase (PNPO).